The primary structure comprises 174 residues: Nascent polypeptide-associated complex subunit alpha (174 aa).

N-acetylserine is present on S2. The NAC-A/B domain maps to N14 to L78. The segment at A85–K137 is disordered. The residue at position 93 (S93) is a Phosphoserine. Low complexity predominate over residues A111–A120. Residues A121–A132 are compositionally biased toward acidic residues. Residues L135–K174 form the UBA domain.

The protein belongs to the NAC-alpha family. Part of the nascent polypeptide-associated complex (NAC), consisting of EGD2 and either EGD1 or BTT1. NAC associates with ribosomes via EGD1 or BTT1, and with the CCR4-NOT complex.

The protein resides in the cytoplasm. It is found in the nucleus. Component of the nascent polypeptide-associated complex (NAC), a dynamic component of the ribosomal exit tunnel, protecting the emerging polypeptides from interaction with other cytoplasmic proteins to ensure appropriate nascent protein targeting. The NAC complex also promotes mitochondrial protein import by enhancing productive ribosome interactions with the outer mitochondrial membrane and blocks the inappropriate interaction of ribosomes translating non-secretory nascent polypeptides with translocation sites in the membrane of the endoplasmic reticulum. EGD2 may also be involved in transcription regulation. The protein is Nascent polypeptide-associated complex subunit alpha (EGD2) of Saccharomyces cerevisiae (strain YJM789) (Baker's yeast).